A 523-amino-acid chain; its full sequence is Cilia- and flagella-associated protein 157 (523 aa).

A disordered region spans residues 1–31; the sequence is MAPKKKPNKGGKEMQGKKIGGKKDASGTKTP. Residues 10–26 show a composition bias toward basic and acidic residues; the sequence is GGKEMQGKKIGGKKDAS. Threonine 30 is modified (phosphothreonine). Coiled coils occupy residues 32 to 191, 248 to 274, and 302 to 371; these read ELAM…LEKK, VQLL…LENT, and GTEE…VLIQ. The segment at 419–440 is disordered; it reads QPDMGSHQDKQPQGLSKESQRI. Polar residues predominate over residues 429–440; that stretch reads QPQGLSKESQRI.

Belongs to the CFAP157 family. As to quaternary structure, interacts with TUBB and TUBA4A. Interacts with CEP350. Specifically expressed in tissues containing motile cilia.

Its subcellular location is the cytoplasm. It is found in the cytoskeleton. It localises to the cilium basal body. In terms of biological role, specifically required during spermatogenesis for flagellum morphogenesis and sperm motility. May be required to suppress the formation of supernumerary axonemes and ensure a correct ultrastructure. The polypeptide is Cilia- and flagella-associated protein 157 (Mus musculus (Mouse)).